The chain runs to 232 residues: Orotate phosphoribosyltransferase (232 aa).

Residue K28 participates in 5-phospho-alpha-D-ribose 1-diphosphate binding. 36 to 37 (FF) contacts orotate. Residues 78 to 79 (YK), R108, K109, K112, H114, and 134 to 142 (DDVITAGTA) each bind 5-phospho-alpha-D-ribose 1-diphosphate. Orotate-binding residues include T138 and R166.

This sequence belongs to the purine/pyrimidine phosphoribosyltransferase family. PyrE subfamily. Homodimer.

It catalyses the reaction orotidine 5'-phosphate + diphosphate = orotate + 5-phospho-alpha-D-ribose 1-diphosphate. It participates in pyrimidine metabolism; UMP biosynthesis via de novo pathway; UMP from orotate: step 1/2. Functionally, catalyzes the transfer of a ribosyl phosphate group from 5-phosphoribose 1-diphosphate to orotate, leading to the formation of orotidine monophosphate (OMP). This Sordaria macrospora protein is Orotate phosphoribosyltransferase (URA5).